The primary structure comprises 513 residues: Probable DNA ligase (513 aa).

E213 lines the ATP pocket. Catalysis depends on K215, which acts as the N6-AMP-lysine intermediate. Positions 220, 235, 264, 304, 376, and 382 each coordinate ATP.

This sequence belongs to the ATP-dependent DNA ligase family. Mg(2+) serves as cofactor.

The catalysed reaction is ATP + (deoxyribonucleotide)n-3'-hydroxyl + 5'-phospho-(deoxyribonucleotide)m = (deoxyribonucleotide)n+m + AMP + diphosphate.. Functionally, DNA ligase that seals nicks in double-stranded DNA during DNA replication, DNA recombination and DNA repair. The chain is Probable DNA ligase from Anaeromyxobacter sp. (strain K).